An 89-amino-acid chain; its full sequence is MAISKEKKNEIIAQYARHEGDTGSVEVQVAVLTWEINHLNDHIKQHKKDHATYRGLMKKIGRRRNLLAYLRKNDVNRYRELINSLGLRR.

Belongs to the universal ribosomal protein uS15 family. Part of the 30S ribosomal subunit. Forms a bridge to the 50S subunit in the 70S ribosome, contacting the 23S rRNA.

One of the primary rRNA binding proteins, it binds directly to 16S rRNA where it helps nucleate assembly of the platform of the 30S subunit by binding and bridging several RNA helices of the 16S rRNA. Functionally, forms an intersubunit bridge (bridge B4) with the 23S rRNA of the 50S subunit in the ribosome. The chain is Small ribosomal subunit protein uS15 from Streptococcus gordonii (strain Challis / ATCC 35105 / BCRC 15272 / CH1 / DL1 / V288).